Here is a 375-residue protein sequence, read N- to C-terminus: Neuropeptide Y receptor type 4-2 (375 aa).

The Extracellular portion of the chain corresponds to Met-1–Asp-39. Residues Asn-2, Asn-19, and Asn-29 are each glycosylated (N-linked (GlcNAc...) asparagine). A helical transmembrane segment spans residues Val-40–Leu-60. Over Cys-61 to Asp-87 the chain is Cytoplasmic. The chain crosses the membrane as a helical span at residues Phe-88–Ile-108. The Extracellular portion of the chain corresponds to Phe-109–Met-116. The cysteines at positions 114 and 201 are disulfide-linked. A helical membrane pass occupies residues Ser-117–Leu-137. Topologically, residues Glu-138–Gln-155 are cytoplasmic. A helical transmembrane segment spans residues Ala-156–Ala-176. The Extracellular portion of the chain corresponds to Asn-177–Thr-212. Asn-187 carries an N-linked (GlcNAc...) asparagine glycan. The chain crosses the membrane as a helical span at residues Ile-213–Cys-233. Residues Tyr-234–Val-263 lie on the Cytoplasmic side of the membrane. Residues Asn-264 to Phe-284 traverse the membrane as a helical segment. Residues Asn-285–Asn-301 are Extracellular-facing. A helical membrane pass occupies residues Leu-302–Tyr-322. Residues Gly-323–Ile-375 are Cytoplasmic-facing. A lipid anchor (S-palmitoyl cysteine) is attached at Cys-340.

It belongs to the G-protein coupled receptor 1 family.

The protein resides in the cell membrane. Functionally, g protein-coupled receptor for PPY/pancreatic polypeptide/PP, NPY/neuropeptide Y and PYY/peptide YY that is negatively coupled to cAMP. The rank order of affinity for these polypeptides and their derivatives is PP, PP (2-36) and [Ile-31, Gln-34] PP &gt; [Pro-34] PYY &gt; PYY and [Leu-31, Pro-34] NPY &gt; NPY &gt; PYY (3-36) and NPY (2-36) &gt; PP (13-36) &gt; PP (31-36) &gt; NPY free acid. The polypeptide is Neuropeptide Y receptor type 4-2 (Homo sapiens (Human)).